Consider the following 276-residue polypeptide: Large ribosomal subunit protein uL2 (276 aa).

2 disordered regions span residues 1–50 (MPIK…GRVT) and 206–276 (GKAG…SKKR). Polar residues predominate over residues 7 to 19 (RPTTPTRRFQTVV). Positions 20–38 (SREDITKQTPEKSLVESKK) are enriched in basic and acidic residues.

The protein belongs to the universal ribosomal protein uL2 family. Part of the 50S ribosomal subunit. Forms a bridge to the 30S subunit in the 70S ribosome.

In terms of biological role, one of the primary rRNA binding proteins. Required for association of the 30S and 50S subunits to form the 70S ribosome, for tRNA binding and peptide bond formation. It has been suggested to have peptidyltransferase activity; this is somewhat controversial. Makes several contacts with the 16S rRNA in the 70S ribosome. The protein is Large ribosomal subunit protein uL2 of Solibacter usitatus (strain Ellin6076).